Here is a 129-residue protein sequence, read N- to C-terminus: uncharacterized protein (129 aa).

3 helical membrane passes run isoleucine 15–phenylalanine 35, isoleucine 48–phenylalanine 68, and isoleucine 107–cysteine 127.

It is found in the membrane. This is an uncharacterized protein from Saccharomyces cerevisiae (strain ATCC 204508 / S288c) (Baker's yeast).